A 310-amino-acid polypeptide reads, in one-letter code: Putative S-adenosyl-L-methionine-dependent methyltransferase MUL_4762 (310 aa).

Residues aspartate 132 and 161-162 contribute to the S-adenosyl-L-methionine site; that span reads DL.

Belongs to the UPF0677 family.

Functionally, exhibits S-adenosyl-L-methionine-dependent methyltransferase activity. The chain is Putative S-adenosyl-L-methionine-dependent methyltransferase MUL_4762 from Mycobacterium ulcerans (strain Agy99).